The following is a 102-amino-acid chain: Small ribosomal subunit protein bS20 (102 aa).

The protein belongs to the bacterial ribosomal protein bS20 family.

In terms of biological role, binds directly to 16S ribosomal RNA. This is Small ribosomal subunit protein bS20 from Synechococcus sp. (strain WH7803).